The sequence spans 284 residues: Tropomyosin (284 aa).

The interval M1–E41 is disordered. Positions M1 to Y284 form a coiled coil. The span at K12–E41 shows a compositional bias: basic and acidic residues.

It belongs to the tropomyosin family. Homodimer.

Its function is as follows. Tropomyosin, in association with the troponin complex, plays a central role in the calcium dependent regulation of muscle contraction. This chain is Tropomyosin, found in Haemaphysalis longicornis (Bush tick).